We begin with the raw amino-acid sequence, 76 residues long: Acyl carrier protein (76 aa).

Residues 1–76 (MSVEEKVKKI…DAIDYVSNKQ (76 aa)) form the Carrier domain. The residue at position 36 (Ser36) is an O-(pantetheine 4'-phosphoryl)serine.

The protein belongs to the acyl carrier protein (ACP) family. Post-translationally, 4'-phosphopantetheine is transferred from CoA to a specific serine of apo-ACP by AcpS. This modification is essential for activity because fatty acids are bound in thioester linkage to the sulfhydryl of the prosthetic group.

It localises to the cytoplasm. It functions in the pathway lipid metabolism; fatty acid biosynthesis. Carrier of the growing fatty acid chain in fatty acid biosynthesis. The sequence is that of Acyl carrier protein from Nitratidesulfovibrio vulgaris (strain ATCC 29579 / DSM 644 / CCUG 34227 / NCIMB 8303 / VKM B-1760 / Hildenborough) (Desulfovibrio vulgaris).